The chain runs to 492 residues: Bifunctional purine biosynthesis protein PurH (492 aa).

Residues 1 to 144 (MKKAILSVSN…KNFKHVTTIV (144 aa)) form the MGS-like domain.

Belongs to the PurH family.

It catalyses the reaction (6R)-10-formyltetrahydrofolate + 5-amino-1-(5-phospho-beta-D-ribosyl)imidazole-4-carboxamide = 5-formamido-1-(5-phospho-D-ribosyl)imidazole-4-carboxamide + (6S)-5,6,7,8-tetrahydrofolate. The enzyme catalyses IMP + H2O = 5-formamido-1-(5-phospho-D-ribosyl)imidazole-4-carboxamide. It functions in the pathway purine metabolism; IMP biosynthesis via de novo pathway; 5-formamido-1-(5-phospho-D-ribosyl)imidazole-4-carboxamide from 5-amino-1-(5-phospho-D-ribosyl)imidazole-4-carboxamide (10-formyl THF route): step 1/1. It participates in purine metabolism; IMP biosynthesis via de novo pathway; IMP from 5-formamido-1-(5-phospho-D-ribosyl)imidazole-4-carboxamide: step 1/1. The sequence is that of Bifunctional purine biosynthesis protein PurH from Staphylococcus haemolyticus (strain JCSC1435).